Consider the following 181-residue polypeptide: Probable pyruvoyl-dependent arginine decarboxylase (181 aa).

Pyruvic acid (Ser) is present on Ser-43.

The protein belongs to the PdaD family. It depends on pyruvate as a cofactor.

It catalyses the reaction L-arginine + H(+) = agmatine + CO2. The chain is Probable pyruvoyl-dependent arginine decarboxylase from Chlorobium limicola (strain DSM 245 / NBRC 103803 / 6330).